Reading from the N-terminus, the 1016-residue chain is MAPRTLWSCYLCCLLTAAAGAASYPPRGFSLYTGSSGALSPGGPQAQIAPRPASRHRNWCAYVVTRTVSCVLEDGVETYVKYQPCAWGQPQCPQSIMYRRFLRPRYRVAYKTVTDMEWRCCQGYGGDDCAESPAPALGPASSTPRPLARPARPNLSGSSAGSPLSGLGGEGPGESEKVQQLEEQVQSLTKELQGLRGVLQGLSGRLAEDVQRAVETAFNGRQQPADAAARPGVHETLNEIQHQLQLLDTRVSTHDQELGHLNNHHGGSSSSGGSRAPAPASAPPGPSEELLRQLEQRLQESCSVCLAGLDGFRRQQQEDRERLRAMEKLLASVEERQRHLAGLAVGRRPPQECCSPELGRRLAELERRLDVVAGSVTVLSGRRGTELGGAAGQGGHPPGYTSLASRLSRLEDRFNSTLGPSEEQEESWPGAPGGLSHWLPAARGRLEQLGGLLANVSGELGGRLDLLEEQVAGAMQACGQLCSGAPGEQDSQVSEILSALERRVLDSEGQLRLVGSGLHTVEAAGEARQATLEGLQEVVGRLQDRVDAQDETAAEFTLRLNLTAARLGQLEGLLQAHGDEGCGACGGVQEELGRLRDGVERCSCPLLPPRGPGAGPGVGGPSRGPLDGFSVFGGSSGSALQALQGELSEVILSFSSLNDSLNELQTTVEGQGADLADLGATKDRIISEINRLQQEATEHATESEERFRGLEEGQAQAGQCPSLEGRLGRLEGVCERLDTVAGGLQGLREGLSRHVAGLWAGLRETNTTSQMQAALLEKLVGGQAGLGRRLGALNSSLQLLEDRLHQLSLKDLTGPAGEAGPPGPPGLQGPPGPAGPPGSPGKDGQEGPIGPPGPQGEQGVEGAPAAPVPQVAFSAALSLPRSEPGTVPFDRVLLNDGGYYDPETGVFTAPLAGRYLLSAVLTGHRHEKVEAVLSRSNQGVARVDSGGYEPEGLENKPVAESQPSPGTLGVFSLILPLQAGDTVCVDLVMGQLAHSEEPLTIFSGALLYGDPELEHA.

The first 21 residues, 1–21 (MAPRTLWSCYLCCLLTAAAGA), serve as a signal peptide directing secretion. The EMI domain maps to 56–131 (HRNWCAYVVT…QGYGGDDCAE (76 aa)). 3 cysteine pairs are disulfide-bonded: cysteine 60–cysteine 121, cysteine 85–cysteine 92, and cysteine 120–cysteine 129. Residues 135-182 (PALGPASSTPRPLARPARPNLSGSSAGSPLSGLGGEGPGESEKVQQLE) form a disordered region. Residues 139–165 (PASSTPRPLARPARPNLSGSSAGSPLS) are compositionally biased toward low complexity. An N-linked (GlcNAc...) asparagine glycan is attached at asparagine 154. Residues 216-256 (TAFNGRQQPADAAARPGVHETLNEIQHQLQLLDTRVSTHDQ) adopt a coiled-coil conformation. 2 disordered regions span residues 257-288 (ELGHLNNHHGGSSSSGGSRAPAPASAPPGPSE) and 383-402 (RGTELGGAAGQGGHPPGYTS). The span at 266–279 (GGSSSSGGSRAPAP) shows a compositional bias: low complexity. Residues 356 to 420 (PELGRRLAEL…EDRFNSTLGP (65 aa)) are a coiled coil. The segment covering 386-397 (ELGGAAGQGGHP) has biased composition (gly residues). A glycan (N-linked (GlcNAc...) asparagine) is linked at asparagine 415. Positions 416–435 (STLGPSEEQEESWPGAPGGL) are disordered. 2 N-linked (GlcNAc...) asparagine glycosylation sites follow: asparagine 455 and asparagine 561. A coiled-coil region spans residues 576–603 (AHGDEGCGACGGVQEELGRLRDGVERCS). N-linked (GlcNAc...) asparagine glycosylation is present at asparagine 658. The stretch at 685–752 (IISEINRLQQ…GLQGLREGLS (68 aa)) forms a coiled coil. N-linked (GlcNAc...) asparagine glycosylation is found at asparagine 766 and asparagine 794. 2 disordered regions span residues 811 to 863 (DLTG…VEGA) and 942 to 961 (RVDSGGYEPEGLENKPVAES). The Collagen-like domain maps to 814 to 864 (GPAGEAGPPGPPGLQGPPGPAGPPGSPGKDGQEGPIGPPGPQGEQGVEGAP). Positions 821-839 (PPGPPGLQGPPGPAGPPGS) are enriched in pro residues. Positions 835–857 (GPPGSPGKDGQEGPIGPPGPQGE) form a coiled coil. Residues 866–1013 (APVPQVAFSA…GALLYGDPEL (148 aa)) form the C1q domain.

Homotrimer associated through a moderately stable interaction of the C-terminal globular C1q domains, allowing the nucleation of the triple helix and then a further quaternary assembly to higher-order polymers via intermolecular disulfide bonds. Interacts with EMILIN2. Interacts with EFEMP2; this interaction promotes the incorporation of EFEMP2 into the extracellular matrix. Distributed in tissues where resilience and elastic recoil are prominent. Highest levels in the adult small intestine, aorta, lung, uterus, and appendix and in the fetal spleen, kidney, lung, and heart; intermediate expression was detected in adult liver, ovary, colon, stomach, lymph node and spleen; adult heart, bladder, prostate, adrenal gland, mammary gland, placenta and kidney showed low expression whereas a series of other adult tissues, including skeletal muscle and different regions of adult brain show no expression. Detected in intramuscular nerve bundles, where it particularly localizes in the epineurium, the most external layer of dense connective tissue enclosing the nerve.

The protein localises to the secreted. It localises to the extracellular space. The protein resides in the extracellular matrix. In terms of biological role, involved in elastic and collagen fibers formation. It is required for EFEMP2 deposition into the extracellular matrix, and collagen network assembly and cross-linking via protein-lysine 6-oxidase/LOX activity. May be responsible for anchoring smooth muscle cells to elastic fibers, and may be involved in the processes that regulate vessel assembly. Has cell adhesive capacity. This chain is EMILIN-1 (EMILIN1), found in Homo sapiens (Human).